An 871-amino-acid chain; its full sequence is Translation initiation factor IF-2 (871 aa).

2 disordered regions span residues 60-101 and 184-203; these read KKNI…QEVK and ESLKKKKKEKKSFVASKKES. The span at 61–72 shows a compositional bias: basic residues; it reads KNIKTPTAKKPK. The span at 73-101 shows a compositional bias: basic and acidic residues; sequence KENIKEQEKLNESEKKEPKKEEKLKQEVK. Residues 370–537 form the tr-type G domain; it reads TRAPVITIMG…IVLLQADILE (168 aa). Positions 379-386 are G1; it reads GHVDHGKT. Position 379–386 (379–386) interacts with GTP; that stretch reads GHVDHGKT. A G2 region spans residues 404 to 408; that stretch reads GITQH. The G3 stretch occupies residues 425 to 428; that stretch reads DTPG. GTP is bound by residues 425 to 429 and 479 to 482; these read DTPGH and NKMD. A G4 region spans residues 479–482; it reads NKMD. Positions 515-517 are G5; the sequence is SAK.

The protein belongs to the TRAFAC class translation factor GTPase superfamily. Classic translation factor GTPase family. IF-2 subfamily.

The protein resides in the cytoplasm. One of the essential components for the initiation of protein synthesis. Protects formylmethionyl-tRNA from spontaneous hydrolysis and promotes its binding to the 30S ribosomal subunits. Also involved in the hydrolysis of GTP during the formation of the 70S ribosomal complex. The chain is Translation initiation factor IF-2 from Campylobacter jejuni subsp. jejuni serotype O:23/36 (strain 81-176).